Reading from the N-terminus, the 621-residue chain is DNA-directed RNA polymerase subunit gamma (621 aa).

3 residues coordinate Mg(2+): Asp-463, Asp-465, and Asp-467.

Belongs to the RNA polymerase beta' chain family. RpoC1 subfamily. In terms of assembly, in cyanobacteria the RNAP catalytic core is composed of 2 alpha, 1 beta, 1 beta', 1 gamma and 1 omega subunit. When a sigma factor is associated with the core the holoenzyme is formed, which can initiate transcription. Mg(2+) is required as a cofactor.

It carries out the reaction RNA(n) + a ribonucleoside 5'-triphosphate = RNA(n+1) + diphosphate. DNA-dependent RNA polymerase catalyzes the transcription of DNA into RNA using the four ribonucleoside triphosphates as substrates. In Nostoc commune, this protein is DNA-directed RNA polymerase subunit gamma.